Reading from the N-terminus, the 99-residue chain is Phosphoribosyl-ATP pyrophosphatase (99 aa).

Belongs to the PRA-PH family.

Its subcellular location is the cytoplasm. It catalyses the reaction 1-(5-phospho-beta-D-ribosyl)-ATP + H2O = 1-(5-phospho-beta-D-ribosyl)-5'-AMP + diphosphate + H(+). It participates in amino-acid biosynthesis; L-histidine biosynthesis; L-histidine from 5-phospho-alpha-D-ribose 1-diphosphate: step 2/9. The polypeptide is Phosphoribosyl-ATP pyrophosphatase (Methanococcoides burtonii (strain DSM 6242 / NBRC 107633 / OCM 468 / ACE-M)).